The sequence spans 286 residues: ATP synthase gamma chain (286 aa).

Belongs to the ATPase gamma chain family. F-type ATPases have 2 components, CF(1) - the catalytic core - and CF(0) - the membrane proton channel. CF(1) has five subunits: alpha(3), beta(3), gamma(1), delta(1), epsilon(1). CF(0) has three main subunits: a, b and c.

The protein resides in the cell inner membrane. Functionally, produces ATP from ADP in the presence of a proton gradient across the membrane. The gamma chain is believed to be important in regulating ATPase activity and the flow of protons through the CF(0) complex. This Pseudomonas fluorescens (strain SBW25) protein is ATP synthase gamma chain.